We begin with the raw amino-acid sequence, 187 residues long: Elongation factor P (187 aa).

Belongs to the elongation factor P family.

It is found in the cytoplasm. It functions in the pathway protein biosynthesis; polypeptide chain elongation. Involved in peptide bond synthesis. Stimulates efficient translation and peptide-bond synthesis on native or reconstituted 70S ribosomes in vitro. Probably functions indirectly by altering the affinity of the ribosome for aminoacyl-tRNA, thus increasing their reactivity as acceptors for peptidyl transferase. This Acidothermus cellulolyticus (strain ATCC 43068 / DSM 8971 / 11B) protein is Elongation factor P.